The following is a 324-amino-acid chain: Coproporphyrin III ferrochelatase (324 aa).

Fe(2+) is bound by residues His-184 and Glu-266.

Belongs to the ferrochelatase family.

It localises to the cytoplasm. It carries out the reaction Fe-coproporphyrin III + 2 H(+) = coproporphyrin III + Fe(2+). It functions in the pathway porphyrin-containing compound metabolism; protoheme biosynthesis. In terms of biological role, involved in coproporphyrin-dependent heme b biosynthesis. Catalyzes the insertion of ferrous iron into coproporphyrin III to form Fe-coproporphyrin III. In Lactiplantibacillus plantarum (strain ATCC BAA-793 / NCIMB 8826 / WCFS1) (Lactobacillus plantarum), this protein is Coproporphyrin III ferrochelatase.